The sequence spans 200 residues: Golgi to ER traffic protein 1 (200 aa).

Over 1 to 6 (MEPYTL) the chain is Lumenal. Residues 7-26 (LLFIFVIQIVKQIISAVGKQ) form a helical membrane-spanning segment. Topologically, residues 27 to 113 (SIESISWVLY…KVNTFTGYLI (87 aa)) are cytoplasmic. The stretch at 75–107 (AKWTKLNRQHDKLVAEIEQLQKEVDLDKVKVNT) forms a coiled coil. Residues 114–134 (AILTSIPIWFFRVWYRSVVLF) traverse the membrane as a helical segment. Topologically, residues 135 to 158 (YFPPGILPRALEWSIALPFTVTGG) are lumenal. A helical transmembrane segment spans residues 159–175 (VSLTVWMMAAGAVASSL). Topologically, residues 176-200 (TFLFMFPFEKAVPKPVLAKKSPQQL) are cytoplasmic.

The protein belongs to the WRB/GET1 family. Component of the Golgi to ER traffic (GET) complex, which is composed of GET1, GET2 and GET3. Within the complex, GET1 and GET2 form a heterotetramer which is stabilized by phosphatidylinositol binding and which binds to the GET3 homodimer.

The protein localises to the endoplasmic reticulum membrane. It is found in the golgi apparatus membrane. Functionally, required for the post-translational delivery of tail-anchored (TA) proteins to the endoplasmic reticulum. Together with GET2, acts as a membrane receptor for soluble GET3, which recognizes and selectively binds the transmembrane domain of TA proteins in the cytosol. The GET complex cooperates with the HDEL receptor ERD2 to mediate the ATP-dependent retrieval of resident ER proteins that contain a C-terminal H-D-E-L retention signal from the Golgi to the ER. The chain is Golgi to ER traffic protein 1 from Meyerozyma guilliermondii (strain ATCC 6260 / CBS 566 / DSM 6381 / JCM 1539 / NBRC 10279 / NRRL Y-324) (Yeast).